A 359-amino-acid chain; its full sequence is MMP endo-(1,4)-3-O-methyl-alpha-D-mannosidase (359 aa).

As to quaternary structure, monomer in solution.

It carries out the reaction Endohydrolysis of 3-O-methyl-alpha-D-mannosyl-(1-&gt;4)-3-O-methyl-D-mannose linkages within (1,4)-3-O-methyl-alpha-D-mannnan substrates.. Functionally, hydrolase involved in the biosynthesis of 3-O-methylmannose polysaccharides (MMP), which are intracellular polymethylated polysaccharides implicated in the modulation of fatty acid metabolism in non-tuberculous mycobacteria. Highly specific hydrolase that catalyzes the internal cleavage of MMP. Is able to hydrolyze purified MMP into distinct lower order oligomannosides but does not cleave acylated or deacylated forms of 6-O-methylglucose lipopolysaccharide (MGLP), beta-mannans, synthetic 4alpha-oligomannosides or its own reaction products. Products were identified as four distinct oligomannosides differing in the number of mannose units (4 to 8) and methylation pattern (free or methylated C1-OH). Might serve as a recycling enzyme that hydrolyzes mature MMP into defined-size smaller oligomannosides that are, in turn, substrates for ManT and MeT1 activities for further processing into new daughter MMP chains. The sequence is that of MMP endo-(1,4)-3-O-methyl-alpha-D-mannosidase from Mycolicibacterium hassiacum (strain DSM 44199 / CIP 105218 / JCM 12690 / 3849) (Mycobacterium hassiacum).